A 585-amino-acid polypeptide reads, in one-letter code: Testis-specific serine kinase substrate (585 aa).

A compositionally biased stretch (low complexity) spans 91-108 (EPDSSGTDSTTEDSGPLA). A disordered region spans residues 91–125 (EPDSSGTDSTTEDSGPLALPGPPASPTTPWAPEDP). S224 is subject to Phosphoserine. Disordered regions lie at residues 264–312 (HGLS…SEQE) and 559–585 (LEGS…GSEQ). S281 bears the Phosphoserine; by TSSK1 and TSSK2 mark. S309 is modified (phosphoserine).

Phosphorylated on serine residue(s) by STK22A/TSSK1 and STK22B/TSSK2. Testis specific.

Its subcellular location is the cytoplasm. It localises to the cytoskeleton. It is found in the microtubule organizing center. The protein resides in the centrosome. The protein localises to the centriole. Its subcellular location is the cytoplasmic vesicle. It localises to the secretory vesicle. It is found in the acrosome. In terms of biological role, may play a role in testicular physiology, most probably in the process of spermatogenesis or spermatid development. This is Testis-specific serine kinase substrate (Tsks) from Mus musculus (Mouse).